Reading from the N-terminus, the 737-residue chain is ATP-dependent RNA helicase SUV3, mitochondrial (737 aa).

The transit peptide at 1–25 (MALVKYSTVFFPLRSLRLFVSIKKA) directs the protein to the mitochondrion. In terms of domain architecture, Helicase ATP-binding spans 226 to 365 (EARKIRRHII…KSVLPLVKSI (140 aa)). 239–246 (GPTNSGKT) serves as a coordination point for ATP. One can recognise a Helicase C-terminal domain in the interval 390 to 546 (PIKDGIKGLR…YLKTAVTWPT (157 aa)).

It belongs to the helicase family. As to quaternary structure, MSU1 and SUV3 are the two components of the mitochondrial degradosome (mtEXO).

It localises to the mitochondrion matrix. The catalysed reaction is ATP + H2O = ADP + phosphate + H(+). Functionally, required for intron-independent turnover and processing of mitochondrial RNA. It is a key control element in nuclear-mitochondrial interactions. In Saccharomyces cerevisiae (strain ATCC 204508 / S288c) (Baker's yeast), this protein is ATP-dependent RNA helicase SUV3, mitochondrial (SUV3).